Consider the following 465-residue polypeptide: Probable Xaa-Pro aminopeptidase pepP (465 aa).

Mn(2+)-binding residues include aspartate 263, aspartate 274, glutamate 397, and glutamate 437.

This sequence belongs to the peptidase M24B family. Requires Mn(2+) as cofactor.

It catalyses the reaction Release of any N-terminal amino acid, including proline, that is linked to proline, even from a dipeptide or tripeptide.. In terms of biological role, catalyzes the removal of a penultimate prolyl residue from the N-termini of peptides. The protein is Probable Xaa-Pro aminopeptidase pepP (pepP) of Penicillium rubens (strain ATCC 28089 / DSM 1075 / NRRL 1951 / Wisconsin 54-1255) (Penicillium chrysogenum).